We begin with the raw amino-acid sequence, 286 residues long: ATP synthase gamma chain (286 aa).

This sequence belongs to the ATPase gamma chain family. F-type ATPases have 2 components, CF(1) - the catalytic core - and CF(0) - the membrane proton channel. CF(1) has five subunits: alpha(3), beta(3), gamma(1), delta(1), epsilon(1). CF(0) has three main subunits: a, b and c.

The protein localises to the cell inner membrane. Produces ATP from ADP in the presence of a proton gradient across the membrane. The gamma chain is believed to be important in regulating ATPase activity and the flow of protons through the CF(0) complex. The polypeptide is ATP synthase gamma chain (Pseudomonas entomophila (strain L48)).